A 69-amino-acid polypeptide reads, in one-letter code: Large ribosomal subunit protein uL30 (69 aa).

The protein belongs to the universal ribosomal protein uL30 family. Part of the 50S ribosomal subunit.

The chain is Large ribosomal subunit protein uL30 from Rhizobium etli (strain CIAT 652).